The sequence spans 175 residues: Large ribosomal subunit protein bL9 (175 aa).

It belongs to the bacterial ribosomal protein bL9 family.

Functionally, binds to the 23S rRNA. This chain is Large ribosomal subunit protein bL9, found in Orientia tsutsugamushi (strain Boryong) (Rickettsia tsutsugamushi).